Here is a 446-residue protein sequence, read N- to C-terminus: GRAM domain-containing protein 2B (446 aa).

Position 1 is an N-acetylmethionine (Met1). A disordered region spans residues 1–120 (MVKKRLPSND…RKKSSSSSQY (120 aa)). The segment covering 29-43 (SRSSTDSPSSVFFSS) has biased composition (low complexity). Residues 95–113 (DKNDCKTESKNDPKTERKK) are compositionally biased toward basic and acidic residues. The region spanning 124–191 (MHFHKLFLSV…FSVTLIKKTK (68 aa)) is the GRAM domain. Over residues 234–247 (TSVGNSPNPSSAEN) the composition is skewed to polar residues. Residues 234 to 253 (TSVGNSPNPSSAENSFRADR) are disordered. Phosphoserine is present on residues Ser239, Ser256, and Ser266. The tract at residues 276–298 (RQDMEGYSSSGSQTPESENSRDF) is disordered. Over residues 282–292 (YSSSGSQTPES) the composition is skewed to polar residues.

The polypeptide is GRAM domain-containing protein 2B (GRAMD2B) (Pongo abelii (Sumatran orangutan)).